The sequence spans 775 residues: Phosphoribosylformylglycinamidine synthase subunit PurL (775 aa).

H81 is an active-site residue. ATP contacts are provided by Y84 and K123. E125 provides a ligand contact to Mg(2+). Substrate-binding positions include 126–129 (SHNH) and R148. Catalysis depends on H127, which acts as the Proton acceptor. D149 lines the Mg(2+) pocket. Q272 is a substrate binding site. Position 300 (D300) interacts with Mg(2+). Position 344 to 346 (344 to 346 (ESQ)) interacts with substrate. D525 and G562 together coordinate ATP. N563 provides a ligand contact to Mg(2+). S565 serves as a coordination point for substrate.

The protein belongs to the FGAMS family. As to quaternary structure, monomer. Part of the FGAM synthase complex composed of 1 PurL, 1 PurQ and 2 PurS subunits.

The protein localises to the cytoplasm. The catalysed reaction is N(2)-formyl-N(1)-(5-phospho-beta-D-ribosyl)glycinamide + L-glutamine + ATP + H2O = 2-formamido-N(1)-(5-O-phospho-beta-D-ribosyl)acetamidine + L-glutamate + ADP + phosphate + H(+). It functions in the pathway purine metabolism; IMP biosynthesis via de novo pathway; 5-amino-1-(5-phospho-D-ribosyl)imidazole from N(2)-formyl-N(1)-(5-phospho-D-ribosyl)glycinamide: step 1/2. Functionally, part of the phosphoribosylformylglycinamidine synthase complex involved in the purines biosynthetic pathway. Catalyzes the ATP-dependent conversion of formylglycinamide ribonucleotide (FGAR) and glutamine to yield formylglycinamidine ribonucleotide (FGAM) and glutamate. The FGAM synthase complex is composed of three subunits. PurQ produces an ammonia molecule by converting glutamine to glutamate. PurL transfers the ammonia molecule to FGAR to form FGAM in an ATP-dependent manner. PurS interacts with PurQ and PurL and is thought to assist in the transfer of the ammonia molecule from PurQ to PurL. This is Phosphoribosylformylglycinamidine synthase subunit PurL from Agrobacterium fabrum (strain C58 / ATCC 33970) (Agrobacterium tumefaciens (strain C58)).